The following is a 228-amino-acid chain: Orotate phosphoribosyltransferase (228 aa).

Residues R107, K108, K111, and 133 to 141 each bind 5-phospho-alpha-D-ribose 1-diphosphate; that span reads EDLTTDGGS. T137 is an orotate binding site.

Belongs to the purine/pyrimidine phosphoribosyltransferase family. PyrE subfamily. Homodimer. Mg(2+) serves as cofactor.

It carries out the reaction orotidine 5'-phosphate + diphosphate = orotate + 5-phospho-alpha-D-ribose 1-diphosphate. The protein operates within pyrimidine metabolism; UMP biosynthesis via de novo pathway; UMP from orotate: step 1/2. Catalyzes the transfer of a ribosyl phosphate group from 5-phosphoribose 1-diphosphate to orotate, leading to the formation of orotidine monophosphate (OMP). The sequence is that of Orotate phosphoribosyltransferase from Jannaschia sp. (strain CCS1).